The primary structure comprises 62 residues: 2-hydroxymuconate tautomerase (62 aa).

P2 (proton acceptor; via imino nitrogen) is an active-site residue. 9-12 (LEGR) contributes to the substrate binding site.

Belongs to the 4-oxalocrotonate tautomerase family. In terms of assembly, homohexamer.

It catalyses the reaction (2Z,4E)-2-hydroxyhexa-2,4-dienedioate = (3E)-2-oxohex-3-enedioate. In terms of biological role, catalyzes both 1,3- and 1,5-keto-enol tautomerization of the diacid 2-hydroxymuconate (2-hydroxy-2,4-hexadienedioate) to produce 2-oxo-4-hexenedioate. This reaction is highly stereoselective and produces a mixture of stereoisomers, where the (3S)-isomer of 2-oxo-4-hexenedioate predominates. Also catalyzes the tautomerization of 2-hydroxymuconate to 2-oxo-3-hexenedioate, however this reaction is slower and occurs after the tautomerization of 2-hydroxymuconate to 2-oxo-4-hexenedioate. Using 2-hydroxy-2,4-pentadienoate, phenylenolpyruvate, (p-hydroxyphenyl)-enolpyruvate and 2-hydroxy-2,4-heptadiene-1,7-dioate, YwhB is a highly efficient 1,3-keto-enol tautomerase, but clearly not a 1,5-keto-enol tautomerase. Tautomerization of the two monoacids 2-hydroxy-2,4-pentadienoate and phenylenolpyruvate produces a mixture of stereoisomers, where the (3R)-isomers predominate. The sequence is that of 2-hydroxymuconate tautomerase (ywhB) from Bacillus subtilis (strain 168).